An 826-amino-acid polypeptide reads, in one-letter code: Disintegrin and metalloproteinase domain-containing protein 8 (826 aa).

The first 16 residues, 1-16 (MLGLWLLSVLWTPAVA), serve as a signal peptide directing secretion. Topologically, residues 17-658 (PGPPLPHVKQ…VSDEQAASTS (642 aa)) are extracellular. N-linked (GlcNAc...) asparagine glycans are attached at residues Asn-89 and Asn-260. The Peptidase M12B domain maps to 196 to 395 (RYVELYVVAD…PQTGCLTNVP (200 aa)). Disulfide bonds link Cys-305–Cys-390, Cys-346–Cys-374, Cys-348–Cys-357, Cys-430–Cys-452, Cys-443–Cys-449, Cys-461–Cys-481, Cys-468–Cys-498, Cys-493–Cys-503, Cys-563–Cys-615, Cys-615–Cys-625, Cys-619–Cys-631, and Cys-633–Cys-642. Zn(2+) is bound at residue His-329. Glu-330 is an active-site residue. His-333 and His-339 together coordinate Zn(2+). The region spanning 403 to 489 (GPVCGNLFVE…TCPEDAFQQN (87 aa)) is the Disintegrin domain. A glycan (N-linked (GlcNAc...) asparagine) is linked at Asn-431. The region spanning 611-643 (RSENCSAKCNNHGVCNHKRECHCHKGWAPPNCV) is the EGF-like domain. An N-linked (GlcNAc...) asparagine glycan is attached at Asn-614. The helical transmembrane segment at 659–683 (LPVSVVVVLVILVAAMVIVAGIVIY) threads the bilayer. The Cytoplasmic segment spans residues 684-826 (RKAPRQIQRR…VALKVPIQKR (143 aa)). Residues 701–826 (SGLSNPLFYT…VALKVPIQKR (126 aa)) are disordered. A compositionally biased stretch (pro residues) spans 733–748 (PPRPIVKPKRPPPAPP). The segment covering 749–763 (GAVSSSPLPVPVYAP) has biased composition (low complexity).

In terms of assembly, interacts with FST3. Zn(2+) is required as a cofactor. Macrophages.

Its subcellular location is the membrane. In terms of biological role, possible involvement in extravasation of leukocytes. This is Disintegrin and metalloproteinase domain-containing protein 8 (Adam8) from Mus musculus (Mouse).